Consider the following 251-residue polypeptide: Putative fatty acid elongase DDB_G0274669 (251 aa).

5 consecutive transmembrane segments (helical) span residues 51–71 (FQIIPIVLVIYLVTIFSIKFL), 82–102 (FISILHNAILCIWSLIMCVGV), 135–155 (WSYIFYISKFYELLDTVIIVL), 177–197 (YITMIQILQFVCLGIAGVLHV), and 211–231 (AFAAAYSINFSFLFLFSKFFV).

Belongs to the ELO family.

The protein resides in the membrane. The catalysed reaction is a very-long-chain acyl-CoA + malonyl-CoA + H(+) = a very-long-chain 3-oxoacyl-CoA + CO2 + CoA. In terms of biological role, could be implicated in synthesis of very long chain fatty acids. The sequence is that of Putative fatty acid elongase DDB_G0274669 from Dictyostelium discoideum (Social amoeba).